We begin with the raw amino-acid sequence, 361 residues long: MSKQQPTQFINPETPGYVGFANLPNQVHRKSVKKGFEFTLMVVGESGLGKSTLINSLFLTDLYPERIIPGAAEKIERTVQIEASTVEIEERGVKLRLTVVDTPGYGDAINSRDCFKTIISYIDEQFERYLHDESGLNRRHIIDNRVHCCFYFISPFGHGLKPLDVAFMKAIHNKVNIVPVIAKADTLTLKERERLKKRILDEIEEHSIKIYHLPDAESDEDEDFKEQTRLLKASIPFSVVGSNQLIEAKGKKVRGRLYPWGVVEVENPEHNDFLKLRTMLITHMQDLQEVTQDLHYENFRSERLKRGGRKVENEDMNKDQILLEKEAELRRMQEMIARMQAQMQMQMQGGDTDSSTLGHHV.

Phosphotyrosine is present on tyrosine 17. A Septin-type G domain is found at 34-306 (KGFEFTLMVV…ENFRSERLKR (273 aa)). Residues 44-51 (GESGLGKS) are G1 motif. Residues 44 to 51 (GESGLGKS), threonine 78, glycine 104, and 183 to 191 (KADTLTLKE) contribute to the GTP site. The segment at 101–104 (DTPG) is G3 motif. The interval 182 to 185 (AKAD) is G4 motif. Lysine 190 bears the N6-acetyllysine mark. At tyrosine 211 the chain carries Phosphotyrosine. At serine 218 the chain carries Phosphoserine. GTP is bound by residues glycine 241 and arginine 256. Residues 260-270 (WGVVEVENPEH) are important for dimerization.

Belongs to the TRAFAC class TrmE-Era-EngA-EngB-Septin-like GTPase superfamily. Septin GTPase family. As to quaternary structure, septins polymerize into heterooligomeric protein complexes that form filaments, and associate with cellular membranes, actin filaments and microtubules. GTPase activity is required for filament formation. Septin filaments are assembled from asymmetrical heterotrimers, composed of SEPTIN2, SEPTIN6 and SEPTIN7 that associate head-to-head to form a hexameric unit. Interaction between SEPTIN2 and SEPTIN7 seems indirect. Also interacts with SEPTIN9 and SEPTIN5. Interaction with SEPTIN4 not detected. Component of a septin core octameric complex consisting of SEPTIN12, SEPTIN7, SEPTIN6 and SEPTIN2 or SEPTIN4 in the order 12-7-6-2-2-6-7-12 or 12-7-6-4-4-6-7-12 and located in the sperm annulus. Interacts with MAP4. Interacts with DZIP1L.

The protein resides in the cytoplasm. It localises to the cytoskeleton. The protein localises to the spindle. Its subcellular location is the cleavage furrow. It is found in the midbody. The protein resides in the cell cortex. It localises to the cell projection. The protein localises to the cilium membrane. Its subcellular location is the cilium. It is found in the flagellum. Its function is as follows. Filament-forming cytoskeletal GTPase. Forms a filamentous structure with SEPTIN12, SEPTIN6, SEPTIN2 and probably SEPTIN4 at the sperm annulus which is required for the structural integrity and motility of the sperm tail during postmeiotic differentiation. Required for normal organization of the actin cytoskeleton. Plays a role in the biogenesis of polarized columnar-shaped epithelium by maintaining polyglutamylated microtubules, thus facilitating efficient vesicle transport, and by impeding MAP4 binding to tubulin. Required for the progression through mitosis. Forms a scaffold at the midplane of the mitotic splindle required to maintain CENPE localization at kinetochores and consequently chromosome congression. During anaphase, may be required for chromosome segregation and spindle elongation. Plays a role in ciliogenesis and collective cell movements. In cilia, required for the integrity of the diffusion barrier at the base of the primary cilium that prevents diffusion of transmembrane proteins between the cilia and plasma membranes: probably acts by regulating the assembly of the tectonic-like complex (also named B9 complex) by localizing TMEM231 protein. This Rattus norvegicus (Rat) protein is Septin-2.